We begin with the raw amino-acid sequence, 142 residues long: Large ribosomal subunit protein cL37 alpha (142 aa).

The N-terminal 62 residues, 1–62 (MALLSPLLSL…AQKRGTVVAM (62 aa)), are a transit peptide targeting the chloroplast. The interval 123 to 142 (RKLRKRGAWPPSKMKKLKNV) is disordered.

It belongs to the chloroplast-specific ribosomal protein cL37 family. In terms of assembly, component of the chloroplast large ribosomal subunit (LSU). Mature 70S chloroplast ribosomes of higher plants consist of a small (30S) and a large (50S) subunit. The 30S small subunit contains 1 molecule of ribosomal RNA (16S rRNA) and 24 different proteins. The 50S large subunit contains 3 rRNA molecules (23S, 5S and 4.5S rRNA) and 33 different proteins.

It is found in the plastid. It localises to the chloroplast. Its function is as follows. Component of the chloroplast ribosome (chloro-ribosome), a dedicated translation machinery responsible for the synthesis of chloroplast genome-encoded proteins, including proteins of the transcription and translation machinery and components of the photosynthetic apparatus. The sequence is that of Large ribosomal subunit protein cL37 alpha (PSRP5) from Spinacia oleracea (Spinach).